The sequence spans 472 residues: Spliceosome-associated protein CWC27 homolog (472 aa).

Residue Ser2 is modified to N-acetylserine. One can recognise a PPIase cyclophilin-type domain in the interval 11 to 166 (TNGKVLLKTT…NPHKIKSCEV (156 aa)). Residues Asn109 and Asn201 are each glycosylated (N-linked (GlcNAc...) asparagine). The stretch at 206–230 (SFGEEAEEEEEEVNRVSQSMKGKSK) forms a coiled coil. Disordered regions lie at residues 206-386 (SFGE…DQTL) and 398-472 (QAIA…KERR). A compositionally biased stretch (basic and acidic residues) spans 231 to 241 (SSHDLLKDDPH). Acidic residues predominate over residues 257–268 (DLVDDGEDESAE). Basic and acidic residues-rich tracts occupy residues 269–286 (HDEY…ERIA), 304–347 (EVEK…KRSE), and 359–371 (EYRR…EALR). Residues 306–377 (EKKSVSRSEE…EALRKQQSKK (72 aa)) are a coiled coil. At Ser346 the chain carries Phosphoserine. Positions 404 to 418 (PENDIPETEVEDDEG) are enriched in acidic residues. Composition is skewed to basic and acidic residues over residues 425 to 437 (QFED…KDAS) and 457 to 472 (RREE…KERR).

This sequence belongs to the cyclophilin-type PPIase family. In terms of assembly, part of the activated spliceosome B/catalytic step 1 spliceosome, one of the forms of the spliceosome which has a well-formed active site but still cannot catalyze the branching reaction and is composed at least of 52 proteins, the U2, U5 and U6 snRNAs and the pre-mRNA. Recruited during early steps of activated spliceosome B maturation, it is probably one of the first proteins released from this complex as he matures to the spliceosome C complex. Component of the minor spliceosome, which splices U12-type introns.

The protein localises to the nucleus. In terms of biological role, as part of the spliceosome, plays a role in pre-mRNA splicing. Probable inactive PPIase with no peptidyl-prolyl cis-trans isomerase activity. As a component of the minor spliceosome, involved in the splicing of U12-type introns in pre-mRNAs. In Homo sapiens (Human), this protein is Spliceosome-associated protein CWC27 homolog.